Here is a 295-residue protein sequence, read N- to C-terminus: Protein NEOXANTHIN-DEFICIENT 1 (295 aa).

The tract at residues 221-251 (PAKVSGPSESDADKENSSEDQSSNVESVSRV) is disordered.

Functionally, required for neoxanthin biosynthesis. Probably not involved directly in the enzymatic conversion of violaxanthin to neoxanthin. Is necessary but not sufficient for neoxanthin synthesis. Seems not required for abscisic acid (ABA) biosynthesis in response to drought stress. This chain is Protein NEOXANTHIN-DEFICIENT 1, found in Solanum lycopersicum (Tomato).